Consider the following 161-residue polypeptide: Probable K(+)/H(+) antiporter subunit E (161 aa).

Transmembrane regions (helical) follow at residues 4–21 (WFPY…WLLL) and 28–50 (GSIV…LQPA).

The protein belongs to the CPA3 antiporters (TC 2.A.63) subunit E family. In terms of assembly, may form a hetero-oligomeric complex that consists of six subunits: PhaAB, PhaC, PhaD, PhaE, PhaF and PhaG.

It is found in the cell membrane. Its function is as follows. Part of a K(+) efflux system which is required for the adaptation of R.meliloti to alkaline pH as well as for the infection process during symbiotic nodule development. The polypeptide is Probable K(+)/H(+) antiporter subunit E (phaE) (Rhizobium meliloti (strain 1021) (Ensifer meliloti)).